Reading from the N-terminus, the 250-residue chain is MSSARYDRAITVFSPDGHLFQVEYAMEAVRKGTVAVGVRGKDVIVLGVEKKATAKLQDARSIRKIVKLDDHICLTFAGLTADSRVLISKALMECQSYRLTVEDSPSVEYISKFIAGIQQRYTQSGGVRPFGISTLIVGFDTDGTPNLYQTDPSGSYSSWKAAAIGRSSKSVGEFLEKNYTDVSEEESIKLAVRALLEIVESGNKNIEIAVIRNKQPIVLLDEQEIDKLVAVVEAEKEIQKEQEKSEKQQK.

The protein belongs to the peptidase T1A family. In terms of assembly, the 26S proteasome consists of a 20S proteasome core and two 19S regulatory subunits. The 20S proteasome core is composed of 28 subunits that are arranged in four stacked rings, resulting in a barrel-shaped structure. The two end rings are each formed by seven alpha subunits, and the two central rings are each formed by seven beta subunits. The catalytic chamber with the active sites is on the inside of the barrel.

The protein localises to the cytoplasm. Its subcellular location is the nucleus. Its function is as follows. The proteasome is a multicatalytic proteinase complex which is characterized by its ability to cleave peptides with Arg, Phe, Tyr, Leu, and Glu adjacent to the leaving group at neutral or slightly basic pH. The proteasome has an ATP-dependent proteolytic activity. This Dictyostelium discoideum (Social amoeba) protein is Proteasome subunit alpha type-7 (psmA7).